The chain runs to 240 residues: Dihydromonapterin reductase (240 aa).

Catalysis depends on Y152, which acts as the Proton acceptor.

The protein belongs to the short-chain dehydrogenases/reductases (SDR) family. FolM subfamily.

The enzyme catalyses (6S)-5,6,7,8-tetrahydrofolate + NADP(+) = 7,8-dihydrofolate + NADPH + H(+). It carries out the reaction 7,8-dihydromonapterin + NADPH + H(+) = 5,6,7,8-tetrahydromonapterin + NADP(+). In terms of biological role, catalyzes the reduction of dihydromonapterin to tetrahydromonapterin. Also has lower activity with dihydrofolate. In Escherichia coli O6:H1 (strain CFT073 / ATCC 700928 / UPEC), this protein is Dihydromonapterin reductase (folM).